An 878-amino-acid chain; its full sequence is MEVKGPSGRSFCCESEGQFKSCLKRHTPSLLLPSSWKGNSGSCLMAKALHRMSPTPNSCPLPLPLCRMSGVLCSRNLFTFKFSLFQLDSGASGEPGHSLGLTLGFSHCGNCQTAVVSAQPEGMASNGAYPALGPGVTANPGTSLSVFTALPFTTPAPGPAHGPLLVTAGAPPGGPLVLSTLPSTPLVTEQDGCGPSGAGASNVFVQMRTEVGPVKAAQAQTLVLTQAPLVWQAPGALCGGVVCPPPLLLAAAPVVPVMAAQVVGGTQACEGGWSQGLPLPPPPPPAAQLPPIVSQGNAGPWPQGAHGEGSLASSQAKAPPDDSCNPRSVYENFRLWQHYKPLARRHLPQSPDTEALSCFLIPVLRSLARRKPTMTLEEGLWRAMREWQHTSNFDRMIFYEMAEKFLEFEAEEEMQIQKSQWMKGPQCLPPPATPRLEPRGPPAPEVVKQPVYLPSKAGPKAPTACLPPPRPQRPVTKARRPPPRPHRRAETKARLPPPRPQRPAETKVPEEIPPEVVQEYVDIMEELLGPSLGATGEPEKQREEGEVKQPQEEDWTPPDPGLLSYTDKLCSQKDFVTKVEAVIHPQFLEELLSPDPQMDFLALSQELEQEEGLTLAQLVEKRLLPLKEKQHARAAPSRGTARLDSSSSKFAAGQGAERDVPVPQQGVGMETCPPQTTARDSQGRGRAHTGMARSKDSVVLLGCQDSPGLRAARPTSPPQDHRPTCPGVGTKDALDLPGGSPVRESHGLAQGSSEEEELPSLAFLLGSQHKLLPWWLPQSPVPASGLLSPEKWGPQGTHQFPSAERRGLNLAPSPANKAKKRPLFGSLSPAEKTPHPGPGLRVSGEQSLTWGLGGPSQSQKRKGDPLVSRKEKKQRCSQ.

4 disordered regions span residues 273–324, 417–566, 627–757, and 775–878; these read WSQG…DDSC, QKSQ…LSYT, KEKQ…EEEE, and WLPQ…RCSQ. Composition is skewed to pro residues over residues 278–288 and 427–444; these read PLPPPPPPAAQ and CLPPPATPRLEPRGPPAP. Residues 476–487 are compositionally biased toward basic residues; sequence TKARRPPPRPHR. Positions 537-551 are enriched in basic and acidic residues; that stretch reads EPEKQREEGEVKQPQ.

The protein belongs to the NUT family.

The polypeptide is NUT family member 2A (NUTM2A) (Homo sapiens (Human)).